Here is a 389-residue protein sequence, read N- to C-terminus: Abscission/NoCut checkpoint regulator (389 aa).

The FYVE-type zinc finger occupies 1–58; the sequence is MESRCYGCAVKFTLFKKEYGCKNCGRAFCNGCLSFSALVPRAGNTQQKVCKQCHTILT. Residues C5, C8, C21, C24, C29, C32, C50, and C53 each contribute to the Zn(2+) site. Phosphoserine is present on S69. Positions 99-112 match the MIM1-A motif; sequence DQAIAERLARLRQE. K132 participates in a covalent cross-link: Glycyl lysine isopeptide (Lys-Gly) (interchain with G-Cter in SUMO2). Disordered stretches follow at residues 158–177 and 204–227; these read PSHT…QAQQ and QNDL…SQSL. A compositionally biased stretch (low complexity) spans 167–177; sequence QAPDTRTQAQQ. The span at 214–226 shows a compositional bias: polar residues; the sequence is SQRTNSQGQASQS. S219 bears the Phosphoserine mark. Positions 226–261 form a coiled coil; it reads SLEEEKYKLLAEAAVELQEENTRQERILALAKRLAV. The MIM1-B signature appears at 252–265; sequence ILALAKRLAVLKGQ. Position 280 is a phosphoserine (S280).

As to quaternary structure, interacts (via MIM1-B) with VPS4A; interaction takes place at the midbody ring following cytokinesis checkpoint activation.

Its subcellular location is the cytoplasm. The protein resides in the cytoskeleton. The protein localises to the microtubule organizing center. It is found in the centrosome. It localises to the cleavage furrow. Its subcellular location is the midbody. The protein resides in the midbody ring. Key regulator of abscission step in cytokinesis: part of the cytokinesis checkpoint, a process required to delay abscission to prevent both premature resolution of intercellular chromosome bridges and accumulation of DNA damage. Together with CHMP4C, required to retain abscission-competent VPS4 (VPS4A and/or VPS4B) at the midbody ring until abscission checkpoint signaling is terminated at late cytokinesis. Deactivation of AURKB results in dephosphorylation of CHMP4C followed by its dissociation from ZFYVE19/ANCHR and VPS4 and subsequent abscission. The chain is Abscission/NoCut checkpoint regulator (Zfyve19) from Mus musculus (Mouse).